Here is a 618-residue protein sequence, read N- to C-terminus: tRNA endonuclease vms-1 (618 aa).

Residues 59–85 (DQCTTCNCPVDFGDRAVLLEHYQSLFH) form a C2H2-type zinc finger. The region spanning 170–311 (RPFDCAIFLW…SDCWQRLQQV (142 aa)) is the VLRF1 domain. Gln213 is a catalytic residue. 2 ANK repeats span residues 437–466 (NRST…CDSS) and 470–496 (GAGL…VKNE). Residues 502–539 (ARTHIPEPKKKVELTEEQEREQAERKKEKKARQKEKEK) are disordered. The segment covering 505-515 (HIPEPKKKVEL) has biased composition (basic and acidic residues). The stretch at 510–557 (KKKVELTEEQEREQAERKKEKKARQKEKEKLKKEIAKRDVEEMEERQK) forms a coiled coil.

It belongs to the ANKZF1/VMS1 family. As to expression, in larval stages and in adults, expressed in intestinal cells, specific neurons in the head and the tail, and in the ventral nerve cord.

The protein localises to the cytoplasm. It localises to the mitochondrion. Functionally, endonuclease that cleaves polypeptidyl-tRNAs downstream of the ribosome-associated quality control (RQC) pathway to release incompletely synthesized polypeptides for degradation. The RQC pathway disassembles aberrantly stalled translation complexes to recycle or degrade the constituent parts. Dispensable for viability and growth but is required for protection against oxidative stress and for wild-type life span. In Caenorhabditis elegans, this protein is tRNA endonuclease vms-1 (vms-1).